A 599-amino-acid chain; its full sequence is Elongation factor 4 (599 aa).

Residues 5 to 187 (STIRNFAIIA…AIVHRLPAPV (183 aa)) enclose the tr-type G domain. GTP contacts are provided by residues 17–22 (DHGKST) and 134–137 (NKAD).

Belongs to the TRAFAC class translation factor GTPase superfamily. Classic translation factor GTPase family. LepA subfamily.

It is found in the cell inner membrane. The catalysed reaction is GTP + H2O = GDP + phosphate + H(+). Functionally, required for accurate and efficient protein synthesis under certain stress conditions. May act as a fidelity factor of the translation reaction, by catalyzing a one-codon backward translocation of tRNAs on improperly translocated ribosomes. Back-translocation proceeds from a post-translocation (POST) complex to a pre-translocation (PRE) complex, thus giving elongation factor G a second chance to translocate the tRNAs correctly. Binds to ribosomes in a GTP-dependent manner. This is Elongation factor 4 from Anaplasma marginale (strain Florida).